A 216-amino-acid chain; its full sequence is Ras-related protein RABE1c (216 aa).

A GTP-binding site is contributed by 22-29; it reads GDSGVGKS. The Effector region motif lies at 44 to 52; sequence FITTIGIDF. GTP-binding positions include 70–74, 128–131, and 159–160; these read DTAGQ, NKAD, and SA. 2 S-geranylgeranyl cysteine lipidation sites follow: Cys-213 and Cys-214.

This sequence belongs to the small GTPase superfamily. Rab family. Interacts with PI5K2.

The protein localises to the golgi apparatus membrane. It is found in the cell membrane. Its function is as follows. Involved in membrane trafficking from the Golgi to the plasma membrane. This Arabidopsis thaliana (Mouse-ear cress) protein is Ras-related protein RABE1c (RABE1C).